An 83-amino-acid chain; its full sequence is Kappa-theraphotoxin-Cg2b (83 aa).

The N-terminal stretch at 1 to 21 (MKGSAFAIILGLVVLCACSFA) is a signal peptide. Positions 22–53 (EDEQDQFASPNELLRSMFLESRHELIPEVEGR) are excised as a propeptide. Intrachain disulfides connect cysteine 55/cysteine 69, cysteine 62/cysteine 74, and cysteine 68/cysteine 78.

Belongs to the neurotoxin 30 (phrixotoxin) family. Expressed by the venom gland.

The protein resides in the secreted. Its function is as follows. Probable ion channel inhibitor. This Chilobrachys guangxiensis (Chinese earth tiger tarantula) protein is Kappa-theraphotoxin-Cg2b.